A 248-amino-acid polypeptide reads, in one-letter code: Myelin protein P0 (248 aa).

The signal sequence occupies residues 1–29 (MAPGAPSSSPSPILAALLFSSLVLSPTLA). The Ig-like V-type domain occupies 30–143 (IVVYTDREVY…DIVGKTSQVT (114 aa)). Residues 30–153 (IVVYTDREVY…LYVFEKVPTR (124 aa)) lie on the Extracellular side of the membrane. Residues Cys-50 and Cys-127 are joined by a disulfide bond. The N-linked (GlcNAc...) (complex) asparagine glycan is linked to Asn-122. The chain crosses the membrane as a helical span at residues 154–179 (YGVVLGAVIGGILGVVLLLLLLFYLI). Residues 180–248 (RYCWLRRQAA…GLGESRKDKK (69 aa)) are Cytoplasmic-facing. Ser-210 carries the phosphoserine; by PKC modification. A disordered region spans residues 222–248 (MLDHSRSTKAASEKKSKGLGESRKDKK). The segment covering 224–248 (DHSRSTKAASEKKSKGLGESRKDKK) has biased composition (basic and acidic residues). Phosphoserine is present on residues Ser-226 and Ser-228. Ser-233 bears the Phosphoserine; by PKC mark. The residue at position 237 (Ser-237) is a Phosphoserine. At Ser-243 the chain carries Phosphoserine; by PKC.

Belongs to the myelin P0 protein family. As to quaternary structure, homodimer and homotetramer. N-glycosylated; contains sulfate-substituted glycan. As to expression, found only in peripheral nervous system Schwann cells.

The protein localises to the cell membrane. In terms of biological role, is an adhesion molecule necessary for normal myelination in the peripheral nervous system. It mediates adhesion between adjacent myelin wraps and ultimately drives myelin compaction. The chain is Myelin protein P0 (Mpz) from Rattus norvegicus (Rat).